A 211-amino-acid polypeptide reads, in one-letter code: Pyridoxine/pyridoxamine 5'-phosphate oxidase (211 aa).

Residues 7 to 10 (RTDY) and Lys-65 each bind substrate. FMN is bound by residues 60 to 65 (RILLIK), 75 to 76 (FT), Arg-81, and Lys-82. Residues Tyr-122, Arg-126, and Ser-130 each coordinate substrate. Residues 139-140 (QS) and Trp-183 each bind FMN. 189–191 (RLH) serves as a coordination point for substrate. Arg-193 lines the FMN pocket.

This sequence belongs to the pyridoxamine 5'-phosphate oxidase family. As to quaternary structure, homodimer. The cofactor is FMN.

It carries out the reaction pyridoxamine 5'-phosphate + O2 + H2O = pyridoxal 5'-phosphate + H2O2 + NH4(+). It catalyses the reaction pyridoxine 5'-phosphate + O2 = pyridoxal 5'-phosphate + H2O2. It participates in cofactor metabolism; pyridoxal 5'-phosphate salvage; pyridoxal 5'-phosphate from pyridoxamine 5'-phosphate: step 1/1. The protein operates within cofactor metabolism; pyridoxal 5'-phosphate salvage; pyridoxal 5'-phosphate from pyridoxine 5'-phosphate: step 1/1. Its function is as follows. Catalyzes the oxidation of either pyridoxine 5'-phosphate (PNP) or pyridoxamine 5'-phosphate (PMP) into pyridoxal 5'-phosphate (PLP). This is Pyridoxine/pyridoxamine 5'-phosphate oxidase from Janthinobacterium sp. (strain Marseille) (Minibacterium massiliensis).